The sequence spans 590 residues: Probable indole-3-acetic acid-amido synthetase GH3.1 (590 aa).

Belongs to the IAA-amido conjugating enzyme family.

Its function is as follows. Catalyzes the synthesis of indole-3-acetic acid (IAA)-amino acid conjugates, providing a mechanism for the plant to cope with the presence of excess auxin. This chain is Probable indole-3-acetic acid-amido synthetase GH3.1 (GH3.1), found in Arabidopsis thaliana (Mouse-ear cress).